Reading from the N-terminus, the 39-residue chain is Osmotin-like protein (39 aa).

This sequence belongs to the thaumatin family. In terms of processing, contains intrachain disulfide bonds.

Its function is as follows. May be an important antifungal protein. This chain is Osmotin-like protein, found in Hevea brasiliensis (Para rubber tree).